Here is a 568-residue protein sequence, read N- to C-terminus: Protein yellow (568 aa).

Residues Met1–Ala28 form the signal peptide. 2 N-linked (GlcNAc...) asparagine glycosylation sites follow: Asn151 and Asn222.

This sequence belongs to the major royal jelly protein family.

The protein resides in the secreted. Controls the pigmentation pattern of the adult cuticle and larval mouth parts. This is Protein yellow (y) from Drosophila guanche (Fruit fly).